We begin with the raw amino-acid sequence, 91 residues long: UPF0512 protein F (91 aa).

This sequence belongs to the UPF0512 family.

This Dictyostelium discoideum (Social amoeba) protein is UPF0512 protein F.